A 585-amino-acid chain; its full sequence is Protein FAM151A (585 aa).

A helical transmembrane segment spans residues 14 to 34; the sequence is WVFAGITCVSVVVIAAIVLAI.

Belongs to the menorin family.

The protein localises to the membrane. In Homo sapiens (Human), this protein is Protein FAM151A (FAM151A).